The chain runs to 660 residues: Histone deacetylase 5 (660 aa).

The residue at position 2 (Ala-2) is an N-acetylalanine. The segment at 26–349 is histone deacetylase; that stretch reads KVGLIYDETM…SLACVQVLLE (324 aa). Catalysis depends on His-158, which acts as the Proton donor/acceptor. Zn(2+) contacts are provided by Asp-198, His-200, and Asp-291.

The protein belongs to the histone deacetylase family. HD type 2 subfamily. Interacts with HDA6. Zn(2+) is required as a cofactor. Expressed in stems, leaves, flowers, siliques and mature seeds.

The protein localises to the nucleus. Its subcellular location is the cytoplasm. The enzyme catalyses N(6)-acetyl-L-lysyl-[histone] + H2O = L-lysyl-[histone] + acetate. With respect to regulation, inhibited by trichostatin A (TSA), a well-known histone deacetylase inhibitor. Responsible for the deacetylation of lysine residues on the N-terminal part of the core histones (H2A, H2B, H3 and H4). Histone deacetylation gives a tag for epigenetic repression and plays an important role in transcriptional regulation, cell cycle progression and developmental events. Histone deacetylases act via the formation of large multiprotein complexes. Involved in the regulation of flowering time by repressing FLC and AGL27/MAF1 expression. Forms a histone deacetylase complex with HDA6, FLD and MSI4/FVE that represses FLC gene expression to control flowering time. Unlike its tandem duplication HDA18, HDA5 does not seem to be required for the cellular patterning in the root epidermis. The chain is Histone deacetylase 5 from Arabidopsis thaliana (Mouse-ear cress).